Reading from the N-terminus, the 228-residue chain is PKHD-type hydroxylase RPE_4577 (228 aa).

A Fe2OG dioxygenase domain is found at 78–180 (TIFPPLFNRY…RIASFFWTQS (103 aa)). Fe cation is bound by residues histidine 98, aspartate 100, and histidine 161. Arginine 171 contacts 2-oxoglutarate.

Fe(2+) serves as cofactor. Requires L-ascorbate as cofactor.

The polypeptide is PKHD-type hydroxylase RPE_4577 (Rhodopseudomonas palustris (strain BisA53)).